The sequence spans 568 residues: Proline--tRNA ligase (568 aa).

Belongs to the class-II aminoacyl-tRNA synthetase family. ProS type 1 subfamily. As to quaternary structure, homodimer.

Its subcellular location is the cytoplasm. It catalyses the reaction tRNA(Pro) + L-proline + ATP = L-prolyl-tRNA(Pro) + AMP + diphosphate. In terms of biological role, catalyzes the attachment of proline to tRNA(Pro) in a two-step reaction: proline is first activated by ATP to form Pro-AMP and then transferred to the acceptor end of tRNA(Pro). As ProRS can inadvertently accommodate and process non-cognate amino acids such as alanine and cysteine, to avoid such errors it has two additional distinct editing activities against alanine. One activity is designated as 'pretransfer' editing and involves the tRNA(Pro)-independent hydrolysis of activated Ala-AMP. The other activity is designated 'posttransfer' editing and involves deacylation of mischarged Ala-tRNA(Pro). The misacylated Cys-tRNA(Pro) is not edited by ProRS. The polypeptide is Proline--tRNA ligase (Aliarcobacter butzleri (strain RM4018) (Arcobacter butzleri)).